Reading from the N-terminus, the 379-residue chain is Heme chaperone HemW (379 aa).

Positions 1-233 (MKSAYIHIPF…MSKMEAHGIH (233 aa)) constitute a Radical SAM core domain. S-adenosyl-L-methionine is bound at residue Tyr-5. [4Fe-4S] cluster contacts are provided by Cys-11, Cys-15, and Cys-18. Residues Gly-60, 61 to 62 (GT), Glu-94, Gln-121, Arg-133, and Asp-158 each bind S-adenosyl-L-methionine.

This sequence belongs to the anaerobic coproporphyrinogen-III oxidase family. HemW subfamily. [4Fe-4S] cluster serves as cofactor.

The protein localises to the cytoplasm. In terms of biological role, probably acts as a heme chaperone, transferring heme to an unknown acceptor. Binds one molecule of heme per monomer, possibly covalently. Binds 1 [4Fe-4S] cluster. The cluster is coordinated with 3 cysteines and an exchangeable S-adenosyl-L-methionine. The sequence is that of Heme chaperone HemW from Bacillus subtilis (strain 168).